We begin with the raw amino-acid sequence, 270 residues long: Orotidine 5'-phosphate decarboxylase (270 aa).

Catalysis depends on lysine 89, which acts as the Proton donor.

It belongs to the OMP decarboxylase family. Type 2 subfamily.

The enzyme catalyses orotidine 5'-phosphate + H(+) = UMP + CO2. It functions in the pathway pyrimidine metabolism; UMP biosynthesis via de novo pathway; UMP from orotate: step 2/2. The sequence is that of Orotidine 5'-phosphate decarboxylase from Dehalococcoides mccartyi (strain CBDB1).